Consider the following 167-residue polypeptide: Photosystem I assembly protein Ycf3 (167 aa).

TPR repeat units follow at residues 35–68 (AFTY…EIDP), 72–105 (SYIL…NPSL), and 120–153 (GEQA…APSN).

It belongs to the Ycf3 family.

The protein localises to the plastid. The protein resides in the chloroplast thylakoid membrane. Essential for the assembly of the photosystem I (PSI) complex. May act as a chaperone-like factor to guide the assembly of the PSI subunits. The sequence is that of Photosystem I assembly protein Ycf3 from Marchantia polymorpha (Common liverwort).